The chain runs to 307 residues: N-acetylmuramic acid 6-phosphate etherase (307 aa).

Residues 62–225 form the SIS domain; the sequence is VVDAFRVGGR…TTASMIRIGK (164 aa). Glu-90 (proton donor) is an active-site residue. Glu-121 is a catalytic residue.

It belongs to the GCKR-like family. MurNAc-6-P etherase subfamily. As to quaternary structure, homodimer.

The enzyme catalyses N-acetyl-D-muramate 6-phosphate + H2O = N-acetyl-D-glucosamine 6-phosphate + (R)-lactate. It participates in amino-sugar metabolism; 1,6-anhydro-N-acetylmuramate degradation. Its pathway is amino-sugar metabolism; N-acetylmuramate degradation. It functions in the pathway cell wall biogenesis; peptidoglycan recycling. Specifically catalyzes the cleavage of the D-lactyl ether substituent of MurNAc 6-phosphate, producing GlcNAc 6-phosphate and D-lactate. Together with AnmK, is also required for the utilization of anhydro-N-acetylmuramic acid (anhMurNAc) either imported from the medium or derived from its own cell wall murein, and thus plays a role in cell wall recycling. The polypeptide is N-acetylmuramic acid 6-phosphate etherase (Brucella anthropi (strain ATCC 49188 / DSM 6882 / CCUG 24695 / JCM 21032 / LMG 3331 / NBRC 15819 / NCTC 12168 / Alc 37) (Ochrobactrum anthropi)).